Reading from the N-terminus, the 40-residue chain is YDLSKNCRLRGGICYIGKCPRRFFRSGSCSRGNVCCLRFG.

3 disulfides stabilise this stretch: Cys7/Cys35, Cys14/Cys29, and Cys19/Cys36. Gly40 carries the post-translational modification Glycine amide.

In terms of assembly, monomer. Homodimer.

It is found in the secreted. The protein resides in the membrane. Its function is as follows. Has antimicrobial activity against the Gram-positive bacteria methicillin-resistant S.aureus ATCC 33591 and L.monocytogenes EGD, the Gram-negative bacterium E.coli ML53p and the yeast C.albicans 820. Has no hemolytic activity towards human erythrocytes. The chain is Beta-defensin 1 from Emys orbicularis (European pond turtle).